An 896-amino-acid polypeptide reads, in one-letter code: MILLAVLFLCFFSSYSASVKGHTTGLSLNNERLYKLTYSTEVFLDGGKGKLQDSVGYRISSDVDVVLLWRNPDGDDDQLIQVTITAVNVENAGQQRGEKSIFKGKSTPKIVGKDNLEALRRPMLLHLVRGKVKEFYSYENEPVGIENLKRGLASLFQMQLTSGTTNEVDISGDCKVTYQAQQDKVVKIKALDTCKIERSGFTTANQVLGVTSKATSVTTYKIEDSFVTAVVAEETRAFALNFLQTVAGKIVSKQKLELKTTEAGPRMVPGKQVAGVIKAIDSKYKAIPIVGQVLQSVCKGCPSLAEHWQSIRKHLEPENLSNAEAVQSFLAFIQHLRTSRREEILQILKAEKKEVLPQLVDAVTSAQTPASLEAILDFLDFKSDSSIILQERFLYACGFASHPDEELLQALLSKFKGSFASNDIRESVMIIIGALVRKLCQNEGCKLKAVVEAKKLILGGLEKPEKKEDTTMYLLALKNALLPEGIPLLLKYAEAGEGPVSHLATTVLQRYDASFITDEVKKTLNRIYHQNRKVHEKTVRTTAAAVILKNNPSYMDVKNILLSIGELPKEMNKYMLTIVQDILHFEMPASKMIRRVLKEMIVHNYDRFSKSGSSSAYTGYVERSPHAASTYSLDILYSGSGILRRSNLNIFQYIGKAELHGSQVVIEAQGLEGLIAATPDEGEENLDSYAGMSAILFDVQLRPVTFFNGYSDLMSKMLSASGDPVSVVKGLILLIDHSQDIQLQSGLKANMDIQGGLAIDISGSMEFSLWYRESKTRVKNRVAVVITSDITVDSSFVKAGLESRAETEAGLEFISTVQFSQYPFLVCMQMDKAEAPLRQFETKYERLSTGRGYVSRRRKESLVPGCELPLHQENSEMCNVVFPPQPESGNSGGGWF.

Residues 1 to 21 (MILLAVLFLCFFSSYSASVKG) form the signal peptide. The Vitellogenin domain maps to 28–659 (LNNERLYKLT…IFQYIGKAEL (632 aa)). Cysteines 174 and 194 form a disulfide.

In terms of assembly, heterodimer; heterodimerizes with the protein disulfide isomerase (P4HB/PDI). Interacts with APOB. Interacts with PRAP1.

It localises to the endoplasmic reticulum. Its subcellular location is the golgi apparatus. The enzyme catalyses a 1,2-diacyl-sn-glycero-3-phosphocholine(in) = a 1,2-diacyl-sn-glycero-3-phosphocholine(out). It catalyses the reaction a 1,2-diacyl-sn-glycero-3-phosphoethanolamine(in) = a 1,2-diacyl-sn-glycero-3-phosphoethanolamine(out). The catalysed reaction is a cholesterol ester(in) = a cholesterol ester(out). It carries out the reaction a triacyl-sn-glycerol(in) = a triacyl-sn-glycerol(out). Its function is as follows. Catalyzes the transport of triglyceride, cholesteryl ester, and phospholipid between phospholipid surfaces. Required for the assembly and secretion of plasma lipoproteins that contain apolipoprotein B. May be involved in regulating cholesteryl ester biosynthesis in cells that produce lipoproteins. The polypeptide is Microsomal triglyceride transfer protein large subunit (Mttp) (Rattus norvegicus (Rat)).